A 482-amino-acid polypeptide reads, in one-letter code: Auxin transporter-like protein 4 (482 aa).

Residues 1-59 (MLSQNQAEEAIVTNMNETEQEGGSSLEEIAEDQSMFNFKSFLWHGGSVWDAWFSCASNQ) lie on the Cytoplasmic side of the membrane. Residues 60-77 (VAQVLLTLPYSFSQLGMV) form a helical membrane-spanning segment. Residues 78–79 (SG) are Extracellular-facing. The helical transmembrane segment at 80 to 100 (IVFQIFYGLIGSWTAYLISVL) threads the bilayer. The Cytoplasmic segment spans residues 101–135 (YVEYRARKEKENVNFKNHVIQWFEVLDGLLGRYWK). A helical membrane pass occupies residues 136 to 156 (ALGLAFNCTFLLFGSVIQLIA). The Extracellular segment spans residues 157 to 172 (CASNIYYINDKLDKRT). A helical membrane pass occupies residues 173–193 (WTYIFGACCATTVFIPSFHNY). The Cytoplasmic portion of the chain corresponds to 194–196 (RIW). The chain crosses the membrane as a helical span at residues 197-217 (SFLGLGMTTYTAWYMAIAAIV). Over 218–232 (NGQIENVVHSGPTKL) the chain is Extracellular. The helical transmembrane segment at 233-253 (VLYFTGATNILYTFGGHAVTV) threads the bilayer. The Cytoplasmic portion of the chain corresponds to 254 to 266 (EIMHAMWKPQKFK). Residues 267-287 (YIYFLATLYVFTLTIPSAVAV) traverse the membrane as a helical segment. Over 288–314 (YWAFGDELLNHSNAFSLLPKNGFRDAA) the chain is Extracellular. The N-linked (GlcNAc...) asparagine glycan is linked to asparagine 297. Residues 315–335 (VILMLIHQFITFGFACTPLYF) traverse the membrane as a helical segment. Topologically, residues 336–356 (VWEKVIGMHDTKSICLRALVR) are cytoplasmic. Residues 357 to 377 (LPVVIPIWFLAIIFPFFGPIN) form a helical membrane-spanning segment. A topological domain (extracellular) is located at residue serine 378. The helical transmembrane segment at 379-399 (AVGALLVTFTVYIIPALAHML) threads the bilayer. Topologically, residues 400 to 422 (TYRTASARKNAVEKPPSFLPSWT) are cytoplasmic. The chain crosses the membrane as a helical span at residues 423–443 (AVYVLNAFIVVWVLVVGFGFG). Residues 444-482 (GWASMTNFIRQIDTFGLFAKCYQCKPPTPPQAPSPHARH) lie on the Extracellular side of the membrane.

Belongs to the amino acid/polyamine transporter 2 family. Amino acid/auxin permease (AAAP) (TC 2.A.18.1) subfamily. In terms of tissue distribution, shoots and roots of nodulating plants, at low levels.

The protein localises to the cell membrane. Functionally, carrier protein involved in proton-driven auxin influx. Mediates the formation of auxin gradient from developing leaves (site of auxin biosynthesis) to tips by contributing to the loading of auxin in vascular tissues and facilitating acropetal (base to tip) auxin transport within inner tissues of the root apex, and basipetal (tip to base) auxin transport within outer tissues of the root apex. May be involved in lateral roots and nodules formation. The sequence is that of Auxin transporter-like protein 4 (LAX4) from Medicago truncatula (Barrel medic).